Reading from the N-terminus, the 221-residue chain is Protein LURP-one-related 17 (221 aa).

A disordered region spans residues Met-1 to Ser-20.

Belongs to the LOR family.

Its function is as follows. Might be related to the phospholipid scramblase and tubby-like superfamily of membrane tethered transcription factors. The sequence is that of Protein LURP-one-related 17 from Arabidopsis thaliana (Mouse-ear cress).